The following is a 30-amino-acid chain: Dermaseptin-S3 (30 aa).

Belongs to the frog skin active peptide (FSAP) family. Dermaseptin subfamily. In terms of assembly, monomer and oligomer. Forms aggregates in aqueous environments. As to expression, expressed by the skin glands.

It is found in the secreted. In terms of biological role, potent antimicrobial peptide with activity against bacteria and protozoa. Also has activity against fungi. Probably acts by disturbing membrane functions with its amphipathic structure. Binds to healthy erythrocytes (this binding is receptor independent), but has very weak hemolytic activity. Does not bind to P.falciparum infected erythrocytes, but accumulates within the parasite. Kills the parasite, but has no hemolytic activity on the host cell. The chain is Dermaseptin-S3 from Phyllomedusa sauvagei (Sauvage's leaf frog).